The chain runs to 68 residues: Conotoxin phi-MiXXVIIB (68 aa).

The signal sequence occupies residues 1–29 (MRFFFLLLTVALFLTSITGDDAERMLGMK). Positions 30-35 (EGGYVR) are excised as a propeptide. Cystine bridges form between cysteine 38–cysteine 49, cysteine 42–cysteine 51, cysteine 45–cysteine 56, and cysteine 50–cysteine 61. At proline 44 the chain carries 4-hydroxyproline.

The protein belongs to the conotoxin G2 superfamily. 1 family. As to expression, expressed by the venom duct.

The protein localises to the secreted. In terms of biological role, this peptide promotes cell proliferation (EC(50)=17.85 uM) and inhibits apoptosis (EC(50)=2.2 uM). The chain is Conotoxin phi-MiXXVIIB from Conus miles (Soldier cone).